The sequence spans 607 residues: MNLQEMNARKEKIRNFSIIAHIDHGKSTLADRILEQTETVSKREMQAQLLDSMDLERERGITIKLNAIELNYKAKDGETYIFHLIDTPGHVDFTYEVSRSLAACEGAILVVDAAQGIEAQTLANVYLALDNDLEILPVINKIDLPAADPEMVRQEIEDVIGLDASEAILASAKAGIGIEEILEQIVEKVPAPQGEVDAPLKALIFDSVYDAYRGVILQIRVIDGSLKVGDRIQLMSNGKEFDVTEVGIFTPKAVSRDFLMAGDVGYVAASIKTVADTRVGDTVTLASNPATEALKGYKEMNPMVFAGIYPIESNKFNDLREALEKLQLNDASLRFEPETSQALGFGFRCGFLGLLHMDVIQERLEREFGIDLIMTAPSVVYHINTTDGETLEVANPSEFPDPTRIENIEEPFVKAQIMVPNDFVGPVMELAQRKRGIFLTMDYLDANRVNIIYNIPLSEIVFDFFDKLKSSTKGYASFDYEISDYRPSNLVKMDILLNAEKVDALSFIVHKDFAFERGKVIVEKLKKLIPRQQFEVPIQATIGNKIVARSDIKALRKNVLAKCYGGDISRKRKLLEKQKAGKKRMKAIGSVEVPQEAFLSVLSMDEE.

In terms of domain architecture, tr-type G spans E11 to Q193. Residues D23–T28 and N140–D143 contribute to the GTP site.

This sequence belongs to the TRAFAC class translation factor GTPase superfamily. Classic translation factor GTPase family. LepA subfamily.

It localises to the cell membrane. The enzyme catalyses GTP + H2O = GDP + phosphate + H(+). Its function is as follows. Required for accurate and efficient protein synthesis under certain stress conditions. May act as a fidelity factor of the translation reaction, by catalyzing a one-codon backward translocation of tRNAs on improperly translocated ribosomes. Back-translocation proceeds from a post-translocation (POST) complex to a pre-translocation (PRE) complex, thus giving elongation factor G a second chance to translocate the tRNAs correctly. Binds to ribosomes in a GTP-dependent manner. The chain is Elongation factor 4 from Lactococcus lactis subsp. lactis (strain IL1403) (Streptococcus lactis).